Here is a 1356-residue protein sequence, read N- to C-terminus: Serine/threonine-protein kinase PSK1 (1356 aa).

At S10 the chain carries Phosphoserine. Residues 20-115 (KHAITHKGTS…SVDSTVSSPL (96 aa)) form a disordered region. Polar residues-rich tracts occupy residues 26–37 (KGTSSSVASLQT) and 54–64 (YDTSLSDVSTP). Residues 99 to 115 (LPSTASSSVDSTVSSPL) show a composition bias toward low complexity. A phosphoserine mark is found at S192, S202, S255, S286, and S327. A PAS 1 domain is found at 450–518 (RTFTSTKNSA…VLHKLLSTEG (69 aa)). Positions 592 to 608 (PTLSSSSTLSLPKMASS) are enriched in low complexity. Disordered regions lie at residues 592–612 (PTLS…PTGS) and 627–660 (YTKP…PVRS). The region spanning 738-807 (LKLKIHSLPY…FINDKYPALD (70 aa)) is the PAS 2 domain. Residue S926 is modified to Phosphoserine. The segment at 948–972 (DSRAHSQSTLSEQEQVPLENDKDSG) is disordered. Polar residues predominate over residues 952 to 961 (HSQSTLSEQE). 4 positions are modified to phosphoserine: S1018, S1023, S1035, and S1055. The span at 1021–1032 (TESLADSKSSGK) shows a compositional bias: polar residues. The disordered stretch occupies residues 1021–1066 (TESLADSKSSGKGLSPLEEEKLIDENATENGLAGSPKDEDGIIMTN). Phosphothreonine is present on T1079. The region spanning 1096 to 1354 (FVSLQKMGEG…IDDINNDKWL (259 aa)) is the Protein kinase domain. ATP contacts are provided by residues 1102–1110 (MGEGAYGKV) and K1125. The Proton acceptor role is filled by D1230.

This sequence belongs to the protein kinase superfamily. Ser/Thr protein kinase family.

The protein resides in the cytoplasm. It carries out the reaction L-seryl-[protein] + ATP = O-phospho-L-seryl-[protein] + ADP + H(+). It catalyses the reaction L-threonyl-[protein] + ATP = O-phospho-L-threonyl-[protein] + ADP + H(+). Functionally, serine/threonine-protein kinase involved in the control of sugar metabolism and translation. Phosphorylates UGP1, which is required for normal glycogen and beta-(1,6)-glucan synthesis. This phosphorylation shifts glucose partitioning toward cell wall glucan synthesis at the expense of glycogen synthesis. The polypeptide is Serine/threonine-protein kinase PSK1 (PSK1) (Saccharomyces cerevisiae (strain ATCC 204508 / S288c) (Baker's yeast)).